A 692-amino-acid polypeptide reads, in one-letter code: Elongation factor G (692 aa).

The tr-type G domain occupies 8-282 (ENTRNIGIMA…AVIDYLPSPL (275 aa)). GTP is bound by residues 17-24 (AHIDAGKT), 81-85 (DTPGH), and 135-138 (NKMD).

This sequence belongs to the TRAFAC class translation factor GTPase superfamily. Classic translation factor GTPase family. EF-G/EF-2 subfamily.

It is found in the cytoplasm. Catalyzes the GTP-dependent ribosomal translocation step during translation elongation. During this step, the ribosome changes from the pre-translocational (PRE) to the post-translocational (POST) state as the newly formed A-site-bound peptidyl-tRNA and P-site-bound deacylated tRNA move to the P and E sites, respectively. Catalyzes the coordinated movement of the two tRNA molecules, the mRNA and conformational changes in the ribosome. The polypeptide is Elongation factor G (Bacillus anthracis (strain CDC 684 / NRRL 3495)).